The chain runs to 87 residues: Small ribosomal subunit protein bS20 (87 aa).

The protein belongs to the bacterial ribosomal protein bS20 family.

Its function is as follows. Binds directly to 16S ribosomal RNA. This chain is Small ribosomal subunit protein bS20, found in Rickettsia bellii (strain OSU 85-389).